The sequence spans 514 residues: 2,3-bisphosphoglycerate-independent phosphoglycerate mutase (514 aa).

Residues aspartate 14 and serine 64 each coordinate Mn(2+). Catalysis depends on serine 64, which acts as the Phosphoserine intermediate. Substrate-binding positions include histidine 125, 155–156 (RD), arginine 187, arginine 193, 263–266 (RADR), and lysine 336. The Mn(2+) site is built by aspartate 403, histidine 407, aspartate 444, histidine 445, and histidine 463.

It belongs to the BPG-independent phosphoglycerate mutase family. In terms of assembly, monomer. Requires Mn(2+) as cofactor.

It catalyses the reaction (2R)-2-phosphoglycerate = (2R)-3-phosphoglycerate. It functions in the pathway carbohydrate degradation; glycolysis; pyruvate from D-glyceraldehyde 3-phosphate: step 3/5. Catalyzes the interconversion of 2-phosphoglycerate and 3-phosphoglycerate. This Shewanella denitrificans (strain OS217 / ATCC BAA-1090 / DSM 15013) protein is 2,3-bisphosphoglycerate-independent phosphoglycerate mutase.